Consider the following 150-residue polypeptide: Autophagy-related protein 16 (150 aa).

The interval methionine 1 to serine 23 is disordered. The segment covering threonine 7 to serine 17 has biased composition (basic and acidic residues). The stretch at aspartate 61–arginine 130 forms a coiled coil.

Belongs to the ATG16 family. As to quaternary structure, homodimer. Part of the 350 kDa complex which is at least composed of ATG5, ATG12 and ATG16. Several units of each may be present in this complex. Interacts directly with ATG12.

The protein resides in the preautophagosomal structure membrane. Stabilizes the ATG5-ATG12 conjugate and mediates the formation of the 350 kDa complex, which is necessary for autophagy. The ATG5-ATG12/ATG16 complex is required for efficient promotion of ATG8-conjugation to phosphatidylethanolamine and ATG8 localization to the pre-autophagosomal structure (PAS). Also recruits ATG3 to the PAS. Involved in endoplasmic reticulum-specific autophagic process and is essential for the survival of cells subjected to severe ER stress. The protein is Autophagy-related protein 16 (ATG16) of Saccharomyces cerevisiae (strain YJM789) (Baker's yeast).